The chain runs to 323 residues: Acetyl esterase (323 aa).

Residues 91–93 (HGG) carry the Involved in the stabilization of the negatively charged intermediate by the formation of the oxyanion hole motif. Residues Ser165, Asp262, and His292 contribute to the active site.

The protein belongs to the 'GDXG' lipolytic enzyme family. As to quaternary structure, homodimer. Interacts with MalT and MelA.

It is found in the cytoplasm. Displays esterase activity towards short chain fatty esters (acyl chain length of up to 8 carbons). Able to hydrolyze triacetylglycerol (triacetin) and tributyrylglycerol (tributyrin), but not trioleylglycerol (triolein) or cholesterol oleate. Negatively regulates MalT activity by antagonizing maltotriose binding. Inhibits MelA galactosidase activity. The sequence is that of Acetyl esterase from Salmonella choleraesuis (strain SC-B67).